Here is a 419-residue protein sequence, read N- to C-terminus: Isocitrate dehydrogenase [NADP] (419 aa).

Thr-102 contributes to the NADP(+) binding site. D-threo-isocitrate-binding residues include Ser-111, Asn-113, Arg-117, Arg-127, and Arg-151. Asp-306 lines the Mg(2+) pocket. NADP(+)-binding positions include His-338 to Tyr-344, Asn-351, Tyr-390, and Arg-394.

It belongs to the isocitrate and isopropylmalate dehydrogenases family. Homodimer. The cofactor is Mg(2+). Requires Mn(2+) as cofactor.

It carries out the reaction D-threo-isocitrate + NADP(+) = 2-oxoglutarate + CO2 + NADPH. Its function is as follows. Catalyzes the oxidative decarboxylation of isocitrate to 2-oxoglutarate and carbon dioxide with the concomitant reduction of NADP(+). This is Isocitrate dehydrogenase [NADP] from Haloferax volcanii (strain ATCC 29605 / DSM 3757 / JCM 8879 / NBRC 14742 / NCIMB 2012 / VKM B-1768 / DS2) (Halobacterium volcanii).